A 380-amino-acid chain; its full sequence is Putative 8-amino-7-oxononanoate synthase (380 aa).

Arginine 22 lines the substrate pocket. Residue 109 to 110 (GY) participates in pyridoxal 5'-phosphate binding. Histidine 134 contacts substrate. Pyridoxal 5'-phosphate is bound by residues serine 182, 207–210 (DEAH), and 238–241 (TLSK). At lysine 241 the chain carries N6-(pyridoxal phosphate)lysine. Threonine 353 contacts substrate.

This sequence belongs to the class-II pyridoxal-phosphate-dependent aminotransferase family. BioF subfamily. As to quaternary structure, homodimer. Pyridoxal 5'-phosphate serves as cofactor.

The catalysed reaction is 6-carboxyhexanoyl-[ACP] + L-alanine + H(+) = (8S)-8-amino-7-oxononanoate + holo-[ACP] + CO2. The protein operates within cofactor biosynthesis; biotin biosynthesis. Functionally, catalyzes the decarboxylative condensation of pimeloyl-[acyl-carrier protein] and L-alanine to produce 8-amino-7-oxononanoate (AON), [acyl-carrier protein], and carbon dioxide. The sequence is that of Putative 8-amino-7-oxononanoate synthase (bioF) from Gloeothece citriformis (strain PCC 7424) (Cyanothece sp. (strain PCC 7424)).